A 624-amino-acid chain; its full sequence is UvrABC system protein C (624 aa).

Residues 25–104 (AEPGVYFMRD…IKQHQPHFNV (80 aa)) enclose the GIY-YIG domain. Positions 214-249 (SELIDTLTPQMEAAAENLNFEQAARIRDQINGLKTL) constitute a UVR domain.

The protein belongs to the UvrC family. As to quaternary structure, interacts with UvrB in an incision complex.

The protein resides in the cytoplasm. In terms of biological role, the UvrABC repair system catalyzes the recognition and processing of DNA lesions. UvrC both incises the 5' and 3' sides of the lesion. The N-terminal half is responsible for the 3' incision and the C-terminal half is responsible for the 5' incision. The protein is UvrABC system protein C of Cyanothece sp. (strain PCC 7425 / ATCC 29141).